The sequence spans 780 residues: MKKRFPTLLATLIWTALYSQHTLADLAEQCMLGVPTYDQPLVTGDPNQLPVRINADKTEANYPDNALFTGNVIVQQGNSTLTANQVELTQVQKPGEVIPLRTVTATGDVNYDDPQIKLKGPKGWSNLNTKDTDIDKGKYQMVGRQGRGDADLMKLRDQSRYTILKNGTFTSCLPGDNSWSVVGSEVIHDREEQVVEVWNARFKIGKVPVFYSPYMQLPVGDKRRSGFLIPNAKFTSNNGFEFLLPYYWNIAPNFDATITPHYMERRGLQWQNEFRYLLAPGSGTMALDWLPNDRIYTGPDGTDKNATRWLYYWGHSGVMDQVWRFNINYTRVSDPAYFTDLTSQYGSTTDGYATQIFTAGYANENWNATLSSKQFQVFTAAGNSNAYRAQPQLDMNYYKNDVGPFDMHVYGQAAKFTSVNPTNPEASRFHIEPTVNLPLSNSWGSINTEAKLLATHYQQDIPASFADNASNPKLKDSVNRVLPQFKVDGKVVFDRSMDWATGFTQTLEPRAQYLYVPYRNQDDIYIYDTTLMQSDYSGLFRDRTYSGLDRIASANQVSTGLTSRIYDDARVERFNVSVGQIYYFSRSRTGNTEAIDNSNDTGSLVWAGDTFWRINDQLGLKGGAQYDTRLGSLTLGNAIMEYRRDADRMIQLNYRYASPKYIQAAVPKVYNPDYQQGISQVGTTASWPIADRWAIVGAYYYDTKAKQPASQLVGLQYNTCCWAVNLGYERKITGWNAQGQTSKYDNKIGFNIELRGLSGGHSLGTAQMLNSGILPYQSAF.

The first 24 residues, 1–24, serve as a signal peptide directing secretion; it reads MKKRFPTLLATLIWTALYSQHTLA.

Belongs to the LptD family. Component of the lipopolysaccharide transport and assembly complex. Interacts with LptE and LptA.

Its subcellular location is the cell outer membrane. Together with LptE, is involved in the assembly of lipopolysaccharide (LPS) at the surface of the outer membrane. The sequence is that of LPS-assembly protein LptD from Yersinia pseudotuberculosis serotype I (strain IP32953).